We begin with the raw amino-acid sequence, 327 residues long: Serum response factor homolog (327 aa).

The segment at 12–43 (QKLQNASPALPEGTSSTPTPSSSTGLLPNGKK) is disordered. The span at 25 to 35 (TSSTPTPSSST) shows a compositional bias: low complexity. One can recognise an MADS-box domain in the interval 45–105 (KGRVKIKMEY…GHVYTYATPK (61 aa)). Positions 189-225 (TFGEDDYNNDESGDDSDSEEASSDIKEEYQGSPTMVK) are disordered. Acidic residues predominate over residues 191–210 (GEDDYNNDESGDDSDSEEAS).

As to expression, expressed in muscle, varying with age, decreasing twofold during the first week of adulthood.

The protein resides in the nucleus. Transcription factor. Regulates myogenesis, in cooperation with transcription factors hlh-1 and hnd-1. Required for maintenance of muscle in adulthood. This chain is Serum response factor homolog, found in Caenorhabditis elegans.